The chain runs to 163 residues: NADPH-dependent 7-cyano-7-deazaguanine reductase (163 aa).

Residues 1–10 (MSKPPRRSPR) are compositionally biased toward basic residues. Positions 1–23 (MSKPPRRSPRKPTPASPELQLGH) are disordered. Cysteine 61 functions as the Thioimide intermediate in the catalytic mechanism. Residue aspartate 68 is the Proton donor of the active site. Substrate is bound by residues 83–85 (LES) and 102–103 (HE).

This sequence belongs to the GTP cyclohydrolase I family. QueF type 1 subfamily.

Its subcellular location is the cytoplasm. The catalysed reaction is 7-aminomethyl-7-carbaguanine + 2 NADP(+) = 7-cyano-7-deazaguanine + 2 NADPH + 3 H(+). It functions in the pathway tRNA modification; tRNA-queuosine biosynthesis. Its function is as follows. Catalyzes the NADPH-dependent reduction of 7-cyano-7-deazaguanine (preQ0) to 7-aminomethyl-7-deazaguanine (preQ1). This Rhodopseudomonas palustris (strain BisA53) protein is NADPH-dependent 7-cyano-7-deazaguanine reductase.